Reading from the N-terminus, the 187-residue chain is GTP cyclohydrolase 1 (187 aa).

Zn(2+)-binding residues include Cys79, His82, and Cys150.

Belongs to the GTP cyclohydrolase I family. As to quaternary structure, toroid-shaped homodecamer, composed of two pentamers of five dimers.

The catalysed reaction is GTP + H2O = 7,8-dihydroneopterin 3'-triphosphate + formate + H(+). It functions in the pathway cofactor biosynthesis; 7,8-dihydroneopterin triphosphate biosynthesis; 7,8-dihydroneopterin triphosphate from GTP: step 1/1. The sequence is that of GTP cyclohydrolase 1 from Fusobacterium nucleatum subsp. nucleatum (strain ATCC 25586 / DSM 15643 / BCRC 10681 / CIP 101130 / JCM 8532 / KCTC 2640 / LMG 13131 / VPI 4355).